The following is a 303-amino-acid chain: UDP-3-O-acyl-N-acetylglucosamine deacetylase (303 aa).

His-78, His-237, and Asp-241 together coordinate Zn(2+). His-264 acts as the Proton donor in catalysis.

It belongs to the LpxC family. It depends on Zn(2+) as a cofactor.

It carries out the reaction a UDP-3-O-[(3R)-3-hydroxyacyl]-N-acetyl-alpha-D-glucosamine + H2O = a UDP-3-O-[(3R)-3-hydroxyacyl]-alpha-D-glucosamine + acetate. Its pathway is glycolipid biosynthesis; lipid IV(A) biosynthesis; lipid IV(A) from (3R)-3-hydroxytetradecanoyl-[acyl-carrier-protein] and UDP-N-acetyl-alpha-D-glucosamine: step 2/6. Its function is as follows. Catalyzes the hydrolysis of UDP-3-O-myristoyl-N-acetylglucosamine to form UDP-3-O-myristoylglucosamine and acetate, the committed step in lipid A biosynthesis. This Stenotrophomonas maltophilia (strain K279a) protein is UDP-3-O-acyl-N-acetylglucosamine deacetylase.